The following is a 288-amino-acid chain: Stress response protein YhaX (288 aa).

The polypeptide is Stress response protein YhaX (yhaX) (Bacillus subtilis (strain 168)).